A 209-amino-acid polypeptide reads, in one-letter code: Uracil phosphoribosyltransferase (209 aa).

Residues arginine 79, arginine 104, and 131–139 (DPMLATGGS) contribute to the 5-phospho-alpha-D-ribose 1-diphosphate site. Uracil contacts are provided by residues isoleucine 194 and 199–201 (GDA). Residue aspartate 200 coordinates 5-phospho-alpha-D-ribose 1-diphosphate.

The protein belongs to the UPRTase family. The cofactor is Mg(2+).

It catalyses the reaction UMP + diphosphate = 5-phospho-alpha-D-ribose 1-diphosphate + uracil. It participates in pyrimidine metabolism; UMP biosynthesis via salvage pathway; UMP from uracil: step 1/1. With respect to regulation, allosterically activated by GTP. Functionally, catalyzes the conversion of uracil and 5-phospho-alpha-D-ribose 1-diphosphate (PRPP) to UMP and diphosphate. The protein is Uracil phosphoribosyltransferase of Streptococcus salivarius.